Consider the following 64-residue polypeptide: MVTKVKCPTCQTELEWGPQSPFRPFCSKRCQLIDLGEWADEEKRIPGEIDPELLPYPEEGEQWQ.

Zn(2+) is bound by residues C7, C10, C26, and C30. The disordered stretch occupies residues 44–64 (RIPGEIDPELLPYPEEGEQWQ).

This sequence belongs to the DNA gyrase inhibitor YacG family. In terms of assembly, interacts with GyrB. Zn(2+) serves as cofactor.

Inhibits all the catalytic activities of DNA gyrase by preventing its interaction with DNA. Acts by binding directly to the C-terminal domain of GyrB, which probably disrupts DNA binding by the gyrase. This chain is DNA gyrase inhibitor YacG, found in Aeromonas hydrophila subsp. hydrophila (strain ATCC 7966 / DSM 30187 / BCRC 13018 / CCUG 14551 / JCM 1027 / KCTC 2358 / NCIMB 9240 / NCTC 8049).